A 451-amino-acid polypeptide reads, in one-letter code: MSFRSIVRDVRDSFGSLSRRSFEVRISGLPGLSGHHRGKSLGSLSELRDRPVVVDQSRWVGLPPELLRDVMKRLEEGESNWPSRKDVVACAAVCRTWREICKDIVQSPEICGKLTFPVSLKQPGPRDGLIQCFIKRDKSKLTYYLYLCLSPAVLSENGKFLLAAKRNRRATSTEYIISVDSKNISRSSNGYVGKMRSNFLGTKFVVYDTQPPYNAGSLMSCQHGSRRISSRRVSPKLPTGSYPIAHVKYELNVLGTRGPRRMQCTMHSIPASAVDPEGVVPGQPEQLLPGPFEESFRSTNTSSRFSFMDRSLDFSSSRFSEISGSANQQGEDDIPEAKERPLVLRNKVPRWHEQLQCWCLNFRGRVTVASVKNFQLIAAASSESSQLEQQQQQQQQNHASSSSSASDHGKVILQFGKVGKDMFTMDYRYPLSAFQAFAICLTSFDTKLACE.

Residues 57 to 112 form the F-box domain; that stretch reads SRWVGLPPELLRDVMKRLEEGESNWPSRKDVVACAAVCRTWREICKDIVQSPEICG. Residues 387 to 406 show a composition bias toward low complexity; the sequence is LEQQQQQQQQNHASSSSSAS. Residues 387–407 form a disordered region; the sequence is LEQQQQQQQQNHASSSSSASD.

It belongs to the TUB family. In terms of tissue distribution, ubiquitous.

This is Tubby-like F-box protein 12 (TULP12) from Oryza sativa subsp. japonica (Rice).